Reading from the N-terminus, the 59-residue chain is Large ribosomal subunit protein uL30 (59 aa).

Belongs to the universal ribosomal protein uL30 family. As to quaternary structure, part of the 50S ribosomal subunit.

This chain is Large ribosomal subunit protein uL30, found in Alteromonas mediterranea (strain DSM 17117 / CIP 110805 / LMG 28347 / Deep ecotype).